Reading from the N-terminus, the 665-residue chain is DNA mismatch repair protein MutL (665 aa).

The protein belongs to the DNA mismatch repair MutL/HexB family.

Its function is as follows. This protein is involved in the repair of mismatches in DNA. It is required for dam-dependent methyl-directed DNA mismatch repair. May act as a 'molecular matchmaker', a protein that promotes the formation of a stable complex between two or more DNA-binding proteins in an ATP-dependent manner without itself being part of a final effector complex. This chain is DNA mismatch repair protein MutL, found in Acidobacterium capsulatum (strain ATCC 51196 / DSM 11244 / BCRC 80197 / JCM 7670 / NBRC 15755 / NCIMB 13165 / 161).